A 518-amino-acid chain; its full sequence is Sodium-dependent glucose transporter 1 (518 aa).

Helical transmembrane passes span 19–39 (TFQD…FIFV), 53–73 (GFLV…SATT), 82–102 (CKTA…IGIL), 107–127 (NVLI…ALHF), 139–159 (LAKL…SDFH), 221–241 (FRRA…FFFY), 307–327 (TSSL…IATS), 347–367 (YTTI…LGEM), 376–396 (LQGK…ASIA), 400–420 (LFPV…KEDR), 438–458 (EEEN…EMIE), and 466–486 (SIIE…YNQY). The span at 414-426 (RQRKEDRKSEDQK) shows a compositional bias: basic and acidic residues. The disordered stretch occupies residues 414–448 (RQRKEDRKSEDQKALLSSSGLNEYEEENEEEDAEK). Residues 436–448 (EYEEENEEEDAEK) show a composition bias toward acidic residues.

The protein belongs to the major facilitator superfamily.

The protein resides in the apical cell membrane. Functionally, may function as a sodium-dependent glucose transporter. Potential channels for urea in the inner medulla of kidney. This Homo sapiens (Human) protein is Sodium-dependent glucose transporter 1.